We begin with the raw amino-acid sequence, 278 residues long: Methyltransferase GfsG (278 aa).

Residues Gln-105 and 128-129 contribute to the S-adenosyl-L-methionine site; that span reads DA. Glu-146 serves as the catalytic Proton acceptor. His-150 contacts S-adenosyl-L-methionine.

The protein belongs to the methyltransferase superfamily.

It participates in antibiotic biosynthesis. Methylase required for synthesis of the 16-membered macrolide antibiotics FD-891 and FD-892. In vitro uses S-adenosyl-L-methionine to methylate a number of biosynthetic intermediates in the synthesis of FD-891. The chain is Methyltransferase GfsG from Streptomyces halstedii.